A 187-amino-acid chain; its full sequence is Large ribosomal subunit protein uL6 (187 aa).

Belongs to the universal ribosomal protein uL6 family. Part of the 50S ribosomal subunit.

This protein binds to the 23S rRNA, and is important in its secondary structure. It is located near the subunit interface in the base of the L7/L12 stalk, and near the tRNA binding site of the peptidyltransferase center. This is Large ribosomal subunit protein uL6 from Thermosynechococcus vestitus (strain NIES-2133 / IAM M-273 / BP-1).